The following is a 363-amino-acid chain: Protein-arginine kinase (363 aa).

Residues 24 to 255 (IVLSSRIRLA…QQLIAQERAA (232 aa)) form the Phosphagen kinase C-terminal domain. Residues 27-31 (SSRIR), histidine 92, arginine 126, 177-181 (RASVM), and 208-213 (RGTYGE) contribute to the ATP site. An RDXXRA motif of the pArg binding pocket involved in allosteric regulation motif is present at residues 338–343 (RDVRRA).

The protein belongs to the ATP:guanido phosphotransferase family.

The enzyme catalyses L-arginyl-[protein] + ATP = N(omega)-phospho-L-arginyl-[protein] + ADP + H(+). Its activity is regulated as follows. Appears to be allosterically activated by the binding of pArg-containing polypeptides to the pArg-binding pocket localized in the C-terminal domain of McsB. In terms of biological role, catalyzes the specific phosphorylation of arginine residues in a large number of proteins. Is part of the bacterial stress response system. Protein arginine phosphorylation has a physiologically important role and is involved in the regulation of many critical cellular processes, such as protein homeostasis, motility, competence, and stringent and stress responses, by regulating gene expression and protein activity. This Geobacillus thermodenitrificans (strain NG80-2) protein is Protein-arginine kinase.